The chain runs to 187 residues: MKIAQELRAGSTIKIGNDPFVVLKAEYNKSGRNAAVVKFKMKNLISGNISDAVYKADDKMDDIKLDKVKAIYSYQNGDSYIFSNPETWEEIELKGEDLGDALNYLEEEMPLDVVYYESTAVAVELPTFVEREVTYTEPGLRGDTSGKVMKPARINTGFEVQVPLFVEQGEWIKIDTRTNEYVERVKK.

Belongs to the elongation factor P family.

The protein resides in the cytoplasm. It participates in protein biosynthesis; polypeptide chain elongation. Involved in peptide bond synthesis. Stimulates efficient translation and peptide-bond synthesis on native or reconstituted 70S ribosomes in vitro. Probably functions indirectly by altering the affinity of the ribosome for aminoacyl-tRNA, thus increasing their reactivity as acceptors for peptidyl transferase. The protein is Elongation factor P of Fusobacterium nucleatum subsp. nucleatum (strain ATCC 25586 / DSM 15643 / BCRC 10681 / CIP 101130 / JCM 8532 / KCTC 2640 / LMG 13131 / VPI 4355).